Reading from the N-terminus, the 299-residue chain is Probable lipid kinase YegS (299 aa).

A DAGKc domain is found at 2–133 (AEFPASLLIL…IDMAQVNKQT (132 aa)). Residues Thr40, 66–72 (GDGTINE), and Thr95 each bind ATP. 3 residues coordinate Mg(2+): Leu215, Asp218, and Leu220. The active-site Proton acceptor is the Glu271.

It belongs to the diacylglycerol/lipid kinase family. YegS lipid kinase subfamily. Requires Mg(2+) as cofactor. Ca(2+) is required as a cofactor.

It localises to the cytoplasm. Probably phosphorylates lipids; the in vivo substrate is unknown. This chain is Probable lipid kinase YegS, found in Escherichia coli (strain 55989 / EAEC).